The sequence spans 545 residues: Chaperonin GroEL 3 (545 aa).

ATP-binding positions include 29-32 (TLGP), 86-90 (DGTTT), G413, 479-481 (DAV), and D495. The tract at residues 526 to 545 (DKQAKAPAGVGPGPGEGFDY) is disordered. The segment covering 535–545 (VGPGPGEGFDY) has biased composition (gly residues).

The protein belongs to the chaperonin (HSP60) family. Forms a cylinder of 14 subunits composed of two heptameric rings stacked back-to-back. Interacts with the co-chaperonin GroES.

It localises to the cytoplasm. It catalyses the reaction ATP + H2O + a folded polypeptide = ADP + phosphate + an unfolded polypeptide.. Together with its co-chaperonin GroES, plays an essential role in assisting protein folding. The GroEL-GroES system forms a nano-cage that allows encapsulation of the non-native substrate proteins and provides a physical environment optimized to promote and accelerate protein folding. The chain is Chaperonin GroEL 3 from Trichormus variabilis (strain ATCC 29413 / PCC 7937) (Anabaena variabilis).